Here is a 545-residue protein sequence, read N- to C-terminus: Sensory neuron membrane protein 1 (545 aa).

The Cytoplasmic portion of the chain corresponds to 1–10 (MELKERNFKK). A helical membrane pass occupies residues 11-31 (IGLICVAVLLCGMVFSYGIFP). At 32-464 (SILRFMIKQN…LFLGLKFNAT (433 aa)) the chain is on the extracellular side. Residues Asn69, Asn214, and Asn227 are each glycosylated (N-linked (GlcNAc...) asparagine). Disulfide bonds link Cys266/Cys331, Cys295/Cys351, and Cys333/Cys340. N-linked (GlcNAc...) asparagine glycans are attached at residues Asn444 and Asn462. Residues 465-485 (VKWLTIIIGTVGAVGSAYMYF) form a helical membrane-spanning segment. Residues 486-545 (RKETKTTDVAPVDVSTPDTNPSSAKDGVVNVSLGRNLPPVIDGLDKPPKLRATELQQERY) are Cytoplasmic-facing.

The protein belongs to the CD36 family. Selectively expressed in antenna.

It is found in the cell membrane. Functionally, plays an olfactory role that is not restricted to pheromone sensitivity. This is Sensory neuron membrane protein 1 (snmp1) from Anopheles gambiae (African malaria mosquito).